Consider the following 250-residue polypeptide: Triosephosphate isomerase (250 aa).

8–10 (NWK) is a binding site for substrate. Catalysis depends on His93, which acts as the Electrophile. The Proton acceptor role is filled by Glu165. Residues Gly171 and Ser211 each coordinate substrate.

The protein belongs to the triosephosphate isomerase family. Homodimer.

The protein localises to the cytoplasm. It carries out the reaction D-glyceraldehyde 3-phosphate = dihydroxyacetone phosphate. Its pathway is carbohydrate biosynthesis; gluconeogenesis. It functions in the pathway carbohydrate degradation; glycolysis; D-glyceraldehyde 3-phosphate from glycerone phosphate: step 1/1. In terms of biological role, involved in the gluconeogenesis. Catalyzes stereospecifically the conversion of dihydroxyacetone phosphate (DHAP) to D-glyceraldehyde-3-phosphate (G3P). In Malacoplasma penetrans (strain HF-2) (Mycoplasma penetrans), this protein is Triosephosphate isomerase.